The sequence spans 156 residues: Succinate dehydrogenase assembly factor 2-B, mitochondrial (156 aa).

The N-terminal 24 residues, 1–24 (MLRQFIVSTVGRRLQLPMMAQSRL), are a transit peptide targeting the mitochondrion.

The protein belongs to the SDHAF2 family. In terms of assembly, interacts with the flavoprotein subunit within the SDH catalytic dimer.

It is found in the mitochondrion matrix. Functionally, plays an essential role in the assembly of succinate dehydrogenase (SDH), an enzyme complex (also referred to as respiratory complex II) that is a component of both the tricarboxylic acid (TCA) cycle and the mitochondrial electron transport chain, and which couples the oxidation of succinate to fumarate with the reduction of ubiquinone (coenzyme Q) to ubiquinol. Required for flavinylation (covalent attachment of FAD) of the flavoprotein subunit of the SDH catalytic dimer. The polypeptide is Succinate dehydrogenase assembly factor 2-B, mitochondrial (Drosophila simulans (Fruit fly)).